The primary structure comprises 234 residues: Sugar fermentation stimulation protein A (234 aa).

The segment at residues 201-220 is a DNA-binding region (H-T-H motif); sequence LLSEAQQRGVEILAYKAEIS.

It belongs to the SfsA family.

In terms of biological role, binds to DNA non-specifically. Could be a regulatory factor involved in maltose metabolism. The protein is Sugar fermentation stimulation protein A of Shigella sonnei (strain Ss046).